The following is a 418-amino-acid chain: Phosphatidylcholine:ceramide cholinephosphotransferase 1 (418 aa).

The 64-residue stretch at 12–75 (WSPKKVADWL…LDMIETLKME (64 aa)) folds into the SAM domain. A Phosphoserine modification is found at Ser-13. A run of 5 helical transmembrane segments spans residues 141–161 (FLAF…ISVV), 189–209 (FSIC…QWLL), 220–240 (FFCI…VTTL), 281–301 (MCGD…YLFI), and 309–329 (LWWY…CILL). His-290 is a catalytic residue. Active-site residues include His-333 and Asp-337. The chain crosses the membrane as a helical span at residues 335-352 (TVDVVVAYYITTRLFWWY).

This sequence belongs to the sphingomyelin synthase family. As to expression, widely expressed. Highest expression in the cardiovascular system.

It localises to the golgi apparatus membrane. The catalysed reaction is an N-acylsphing-4-enine + a 1,2-diacyl-sn-glycero-3-phosphocholine = a sphingomyelin + a 1,2-diacyl-sn-glycerol. It carries out the reaction 1-(9Z-octadecenoyl)-2-acyl-sn-3-glycerol + a sphingomyelin = a 1-(9Z-octadecenoyl)-2-acyl-sn-glycero-3-phosphocholine + an N-acylsphing-4-enine. The enzyme catalyses N-hexadecanoylsphinganine + a 1,2-diacyl-sn-glycero-3-phosphocholine = N-hexadecanoyl-sphinganine-1-phosphocholine + a 1,2-diacyl-sn-glycerol. It catalyses the reaction N-hexadecanoyl-(4R)-hydroxysphinganine + a 1,2-diacyl-sn-glycero-3-phosphocholine = N-hexadecanoyl-(4R)-hydroxysphinganine-phosphocholine + a 1,2-diacyl-sn-glycerol. The catalysed reaction is an N-acylsphing-4-enine + a 1,2-diacyl-sn-glycero-3-phosphoethanolamine = an N-acylsphing-4-enine 1-phosphoethanolamine + a 1,2-diacyl-sn-glycerol. The protein operates within sphingolipid metabolism. In terms of biological role, major sphingomyelin synthase at the Golgi apparatus. Catalyzes the reversible transfer of phosphocholine moiety in sphingomyelin biosynthesis: in the forward reaction transfers phosphocholine head group of phosphatidylcholine (PC) on to ceramide (CER) to form ceramide phosphocholine (sphingomyelin, SM) and diacylglycerol (DAG) as by-product, and in the reverse reaction transfers phosphocholine from SM to DAG to form PC and CER. The direction of the reaction depends on the levels of CER and DAG in Golgi membranes. Converts the newly synthesized CER, that is transported from the endoplasmic reticulum to the trans-Golgi by the Cer transport protein (CERT), to SM. Can form a heteromeric complex with glucosylceramide synthase (GCS) increasing SMS activity and reducing glucosylceramide synthesis, a critical mechanism that controls the metabolic fate of CER in the Golgi. Does not use free phosphorylcholine or CDP-choline as donor. Can also transfer phosphoethanolamine head group of phosphatidylethanolamine (PE) on to CER to form ceramide phosphoethanolamine (CPE). Regulates receptor-mediated signal transduction via mitogenic DAG and proapoptotic CER, as well as via SM, a structural component of membrane rafts that serve as platforms for signal transduction and protein sorting. Plays a role in secretory transport via regulation of DAG pool at the Golgi apparatus and its downstream effects on PRKD1. This Sus scrofa (Pig) protein is Phosphatidylcholine:ceramide cholinephosphotransferase 1 (SGMS1).